Here is a 600-residue protein sequence, read N- to C-terminus: Kynurenine 3-monooxygenase (600 aa).

Residues 217-242 form a disordered region; that stretch reads GDSCADEPSGCGGRKQATTKSQGSEY.

The protein belongs to the aromatic-ring hydroxylase family. KMO subfamily. FAD serves as cofactor.

It is found in the mitochondrion outer membrane. It carries out the reaction L-kynurenine + NADPH + O2 + H(+) = 3-hydroxy-L-kynurenine + NADP(+) + H2O. The protein operates within cofactor biosynthesis; NAD(+) biosynthesis; quinolinate from L-kynurenine: step 1/3. Functionally, catalyzes the hydroxylation of L-kynurenine (L-Kyn) to form 3-hydroxy-L-kynurenine (L-3OHKyn). Required for synthesis of quinolinic acid. The sequence is that of Kynurenine 3-monooxygenase from Mycosarcoma maydis (Corn smut fungus).